The sequence spans 293 residues: Elongation factor Ts (293 aa).

The involved in Mg(2+) ion dislocation from EF-Tu stretch occupies residues 80 to 83 (TDFV).

This sequence belongs to the EF-Ts family.

It localises to the cytoplasm. Functionally, associates with the EF-Tu.GDP complex and induces the exchange of GDP to GTP. It remains bound to the aminoacyl-tRNA.EF-Tu.GTP complex up to the GTP hydrolysis stage on the ribosome. The protein is Elongation factor Ts of Enterococcus faecalis (strain ATCC 700802 / V583).